Reading from the N-terminus, the 409-residue chain is MQTVKALRRVSEPLQWVRSVSYGRRFSALPNYSASDADFEDQVLVEGKAKSRAAILNNPSSLNALSAPMVGRLKRLYESWEENPAISFVLMKGSGKTFCSGADVLSLYHSINEGNTEESKLFFENLYKFVYLQGTYLKPNIAIMDGVTMGCGGGISLPGMFRVATDKTVLAHPEVQIGFHPDAGASYYLSRLPGYLGEYLALTGQKLNGVEMIACGLATHYCLNARLPLIEERIGKLLTDDPAVIEDSLAQYGDLVYPDSSSVLHKIELIDKYFGLDTVEEIIEAMENEAANSCNEWCKKTLKQIKEASPLSLKITLQSIREGRFQTLDQCLTHEYRISICGVSKVVSGDFCEGIRARLVDKDFAPKWDPPRLEDVSKDMVDCYFTPASELDDSDSELKLPTAQREPYF.

Residues 1–26 (MQTVKALRRVSEPLQWVRSVSYGRRF) constitute a mitochondrion transit peptide. Residues 388–409 (ASELDDSDSELKLPTAQREPYF) are disordered.

This sequence belongs to the enoyl-CoA hydratase/isomerase family. Mitochondrion-specific ribosomal protein mS47 subfamily. As to quaternary structure, component of the mitochondrial ribosome small subunit.

It is found in the mitochondrion. This is Small ribosomal subunit protein mS47 from Arabidopsis thaliana (Mouse-ear cress).